The sequence spans 179 residues: Large ribosomal subunit protein uL5 (179 aa).

It belongs to the universal ribosomal protein uL5 family. Part of the 50S ribosomal subunit; part of the 5S rRNA/L5/L18/L25 subcomplex. Contacts the 5S rRNA and the P site tRNA. Forms a bridge to the 30S subunit in the 70S ribosome.

Its function is as follows. This is one of the proteins that bind and probably mediate the attachment of the 5S RNA into the large ribosomal subunit, where it forms part of the central protuberance. In the 70S ribosome it contacts protein S13 of the 30S subunit (bridge B1b), connecting the 2 subunits; this bridge is implicated in subunit movement. Contacts the P site tRNA; the 5S rRNA and some of its associated proteins might help stabilize positioning of ribosome-bound tRNAs. In Shewanella putrefaciens (strain CN-32 / ATCC BAA-453), this protein is Large ribosomal subunit protein uL5.